A 321-amino-acid chain; its full sequence is GDP-L-fucose synthase (321 aa).

Residues 10–16, 36–41, and 105–108 contribute to the NADP(+) site; these read GHRGMVG, RDELNL, and LGSS. Y136 acts as the Proton donor/acceptor in catalysis. NADP(+) is bound by residues K140, 163–166, and H179; that span reads PTNL. Substrate is bound by residues R187, W202, R209, and D278.

The protein belongs to the NAD(P)-dependent epimerase/dehydratase family. Fucose synthase subfamily. In terms of assembly, homodimer.

The protein resides in the cytoplasm. The enzyme catalyses GDP-beta-L-fucose + NADP(+) = GDP-4-dehydro-alpha-D-rhamnose + NADPH + H(+). The protein operates within nucleotide-sugar biosynthesis; GDP-L-fucose biosynthesis via de novo pathway; GDP-L-fucose from GDP-alpha-D-mannose: step 2/2. Its pathway is exopolysaccharide biosynthesis; colanic acid biosynthesis. Its activity is regulated as follows. Subject to product inhibition by NADP and GDP-fucose. In terms of biological role, catalyzes the two-step NADP-dependent conversion of GDP-4-dehydro-6-deoxy-D-mannose to GDP-fucose, involving an epimerase and a reductase reaction. The sequence is that of GDP-L-fucose synthase from Escherichia coli (strain K12).